Consider the following 184-residue polypeptide: ATP synthase subunit b, chloroplastic (184 aa).

The helical transmembrane segment at L27 to L49 threads the bilayer.

The protein belongs to the ATPase B chain family. F-type ATPases have 2 components, F(1) - the catalytic core - and F(0) - the membrane proton channel. F(1) has five subunits: alpha(3), beta(3), gamma(1), delta(1), epsilon(1). F(0) has four main subunits: a(1), b(1), b'(1) and c(10-14). The alpha and beta chains form an alternating ring which encloses part of the gamma chain. F(1) is attached to F(0) by a central stalk formed by the gamma and epsilon chains, while a peripheral stalk is formed by the delta, b and b' chains.

It is found in the plastid. Its subcellular location is the chloroplast thylakoid membrane. F(1)F(0) ATP synthase produces ATP from ADP in the presence of a proton or sodium gradient. F-type ATPases consist of two structural domains, F(1) containing the extramembraneous catalytic core and F(0) containing the membrane proton channel, linked together by a central stalk and a peripheral stalk. During catalysis, ATP synthesis in the catalytic domain of F(1) is coupled via a rotary mechanism of the central stalk subunits to proton translocation. In terms of biological role, component of the F(0) channel, it forms part of the peripheral stalk, linking F(1) to F(0). The chain is ATP synthase subunit b, chloroplastic from Cicer arietinum (Chickpea).